The sequence spans 285 residues: Probable xyloglucan endotransglucosylase/hydrolase protein 12 (285 aa).

The N-terminal stretch at 1–25 (MAAFATKQSPLLLASLLILIGVATG) is a signal peptide. The region spanning 26–215 (SFYDSFDITW…WTNAPFSASY (190 aa)) is the GH16 domain. Glutamate 101 (nucleophile) is an active-site residue. Glutamate 105 (proton donor) is an active-site residue. Glutamate 105 is a xyloglucan binding site. N-linked (GlcNAc...) asparagine glycosylation is present at asparagine 109. Xyloglucan-binding positions include 118–120 (HTN), 128–130 (NRE), 194–195 (DW), and glycine 199. Intrachain disulfides connect cysteine 224-cysteine 235 and cysteine 268-cysteine 282. Arginine 273 provides a ligand contact to xyloglucan.

This sequence belongs to the glycosyl hydrolase 16 family. XTH group 2 subfamily. Contains at least one intrachain disulfide bond essential for its enzymatic activity. In terms of tissue distribution, root specific.

The protein localises to the secreted. It localises to the cell wall. It is found in the extracellular space. Its subcellular location is the apoplast. The enzyme catalyses breaks a beta-(1-&gt;4) bond in the backbone of a xyloglucan and transfers the xyloglucanyl segment on to O-4 of the non-reducing terminal glucose residue of an acceptor, which can be a xyloglucan or an oligosaccharide of xyloglucan.. Functionally, catalyzes xyloglucan endohydrolysis (XEH) and/or endotransglycosylation (XET). Cleaves and religates xyloglucan polymers, an essential constituent of the primary cell wall, and thereby participates in cell wall construction of growing tissues. The protein is Probable xyloglucan endotransglucosylase/hydrolase protein 12 (XTH12) of Arabidopsis thaliana (Mouse-ear cress).